The following is a 304-amino-acid chain: Thyroxine 5-deiodinase (304 aa).

A disordered region spans residues 1–22; sequence MPRQAASRLVVGEGEGPPGASG. The Cytoplasmic portion of the chain corresponds to 1-44; sequence MPRQAASRLVVGEGEGPPGASGPAATMLRSLLLHSLRLCAQTAS. Residues 45 to 67 form a helical; Signal-anchor for type II membrane protein membrane-spanning segment; sequence CLVLFPRFLGTAFMLWLLDFLCI. The Extracellular portion of the chain corresponds to 68–304; it reads RKHFLRRRHP…QLHGTRPHRF (237 aa). Sec-170 is an active-site residue. A non-standard amino acid (selenocysteine) is located at residue Sec-170.

This sequence belongs to the iodothyronine deiodinase family. As to quaternary structure, monomer. Homodimer. May undergo minor heretodimerization with DIO1 and DIO2.

The protein resides in the cell membrane. The protein localises to the endosome membrane. The catalysed reaction is 3,3',5'-triiodo-L-thyronine + iodide + A + H(+) = L-thyroxine + AH2. It catalyses the reaction 3,3'-diiodo-L-thyronine + iodide + A + H(+) = 3,3',5-triiodo-L-thyronine + AH2. The enzyme catalyses 3-iodo-L-thyronine + iodide + A + H(+) = 3,5-diiodo-L-thyronine + AH2. It carries out the reaction L-thyronine + iodide + A + H(+) = 3-iodo-L-thyronine + AH2. The catalysed reaction is 3',5'-diiodo-L-thyronine + iodide + A + H(+) = 3,3',5'-triiodo-L-thyronine + AH2. It catalyses the reaction 3'-iodo-L-thyronine + iodide + A + H(+) = 3,3'-diiodo-L-thyronine + AH2. The enzyme catalyses 3,3',5'-triiodothyronamine + iodide + A + H(+) = 3,3',5,5'-tetraiodothyronamine + AH2. It carries out the reaction 3',5'-diiodothyronamine + iodide + A + H(+) = 3,3',5'-triiodothyronamine + AH2. The catalysed reaction is 3,3'-diiodothyronamine + iodide + A + H(+) = 3,3',5-triiodothyronamine + AH2. It catalyses the reaction 3-iodothyronamine + iodide + A + H(+) = 3,5-diiodothyronamine + AH2. The enzyme catalyses 3'-iodothyronamine + iodide + A + H(+) = 3,3'-diiodothyronamine + AH2. It carries out the reaction thyronamine + iodide + A + H(+) = 3-iodothyronamine + AH2. Plays a crucial role in the metabolism of thyroid hormones (TH) and has specific roles in TH activation and inactivation by deiodination. Catalyzes the deiodination of L-thyroxine (T4) to 3,3',5'-triiodothyronine (rT3), 3,5,3'-triiodothyronine (T3) to 3,3'-diiodothyronine (3,3'-T2), 3,5-diiodothyronine (3,5-T2) to 3-monoiodothyronine (3-T1), rT3 to 3',5'-diiodothyronine (3',5'-T2) and 3,3'-T2 to 3'-monoiodothyronine (3'-T1) via inner-ring deiodination (IRD). Catalyzes the deiodination of 3-T1 to L-thyronine (T0) via outer-ring deiodination (ORD). Catalyzes the tyrosyl ring deiodinations of 3,3',5,5'-tetraiodothyronamine, 3,3',5'-triiodothyronamine, 3,5,3'-triiodothyronamine, 3,5-diiodothyronamine, 3,3'-diiodothyronamine and 3-iodothyronamine. The protein is Thyroxine 5-deiodinase (Dio3) of Mus musculus (Mouse).